The chain runs to 319 residues: ATP-dependent 6-phosphofructokinase (319 aa).

Glycine 11 serves as a coordination point for ATP. Residue 21-25 (RAVVR) participates in ADP binding. Residues 72–73 (RC) and 102–105 (GDGS) each bind ATP. Aspartate 103 contacts Mg(2+). 125–127 (TID) provides a ligand contact to substrate. The active-site Proton acceptor is the aspartate 127. Residue arginine 154 coordinates ADP. Substrate is bound by residues arginine 162 and 169–171 (MGR). ADP contacts are provided by residues 185-187 (GAE), arginine 211, and 213-215 (KKH). Substrate-binding positions include glutamate 222, arginine 243, and 249–252 (HVQR).

It belongs to the phosphofructokinase type A (PFKA) family. ATP-dependent PFK group I subfamily. Prokaryotic clade 'B1' sub-subfamily. In terms of assembly, homotetramer. Requires Mg(2+) as cofactor.

Its subcellular location is the cytoplasm. It carries out the reaction beta-D-fructose 6-phosphate + ATP = beta-D-fructose 1,6-bisphosphate + ADP + H(+). It participates in carbohydrate degradation; glycolysis; D-glyceraldehyde 3-phosphate and glycerone phosphate from D-glucose: step 3/4. With respect to regulation, allosterically activated by ADP and other diphosphonucleosides, and allosterically inhibited by phosphoenolpyruvate. In terms of biological role, catalyzes the phosphorylation of D-fructose 6-phosphate to fructose 1,6-bisphosphate by ATP, the first committing step of glycolysis. The protein is ATP-dependent 6-phosphofructokinase of Bacillus mycoides (strain KBAB4) (Bacillus weihenstephanensis).